A 20-amino-acid chain; its full sequence is Collagenolytic protease 36 kDa C (20 aa).

The region spanning 1–20 (IVGGSEATSGQFPYQXSFQD) is the Peptidase S1 domain. Positions 1–20 (IVGGSEATSGQFPYQXSFQD) are disordered.

This sequence belongs to the peptidase S1 family.

It carries out the reaction Hydrolysis of proteins, with broad specificity for peptide bonds. Native collagen is cleaved about 75% of the length of the molecule from the N-terminus. Low activity on small molecule substrates of both trypsin and chymotrypsin.. Its function is as follows. This enzyme is a serine protease capable of degrading the native triple helix of collagen. This chain is Collagenolytic protease 36 kDa C, found in Paralithodes camtschaticus (Red king crab).